Consider the following 447-residue polypeptide: Phosphoglucosamine mutase (447 aa).

Ser102 serves as the catalytic Phosphoserine intermediate. Ser102, Asp241, Asp243, and Asp245 together coordinate Mg(2+). Ser102 bears the Phosphoserine mark.

The protein belongs to the phosphohexose mutase family. It depends on Mg(2+) as a cofactor. Post-translationally, activated by phosphorylation.

It catalyses the reaction alpha-D-glucosamine 1-phosphate = D-glucosamine 6-phosphate. Functionally, catalyzes the conversion of glucosamine-6-phosphate to glucosamine-1-phosphate. The chain is Phosphoglucosamine mutase from Hamiltonella defensa subsp. Acyrthosiphon pisum (strain 5AT).